We begin with the raw amino-acid sequence, 390 residues long: LIM/homeobox protein Lhx4 (390 aa).

2 consecutive LIM zinc-binding domains span residues Pro-28–Thr-87 and Lys-88–Asn-150. The homeobox DNA-binding region spans Ala-157 to Lys-216. The segment at Arg-161 to Lys-181 is interaction with DNA. The interaction with 5-mCpG DNA stretch occupies residues Arg-199–Lys-211. 2 disordered regions span residues Ser-230–Asp-253 and Ala-356–Phe-390.

It localises to the nucleus. Functionally, may play a critical role in the development of respiratory control mechanisms and in the normal growth and maturation of the lung. Binds preferentially to methylated DNA. The chain is LIM/homeobox protein Lhx4 (LHX4) from Homo sapiens (Human).